Consider the following 218-residue polypeptide: Protein N-lysine methyltransferase METTL21A (218 aa).

Residues Trp-47, 73–75 (GAG), Asp-94, Trp-125, and Ala-143 each bind S-adenosyl-L-methionine.

It belongs to the methyltransferase superfamily. METTL21 family. In terms of assembly, interacts with heat shock 70 family members; at least some of these proteins are methylation substrates.

It localises to the cytoplasm. The enzyme catalyses L-lysyl-[protein] + 3 S-adenosyl-L-methionine = N(6),N(6),N(6)-trimethyl-L-lysyl-[protein] + 3 S-adenosyl-L-homocysteine + 3 H(+). In terms of biological role, protein-lysine methyltransferase that selectively trimethylates residues in heat shock protein 70 (HSP70) family members. Contributes to the in vivo trimethylation of Lys residues in HSPA1 and HSPA8. In vitro methylates 'Lys-561' in HSPA1, 'Lys-564' in HSPA2, 'Lys-585' in HSPA5, 'Lys-563' in HSPA6 and 'Lys-561' in HSPA8. The protein is Protein N-lysine methyltransferase METTL21A (Mettl21A) of Mus musculus (Mouse).